The primary structure comprises 252 residues: 2-succinyl-6-hydroxy-2,4-cyclohexadiene-1-carboxylate synthase (252 aa).

This sequence belongs to the AB hydrolase superfamily. MenH family. As to quaternary structure, monomer.

It carries out the reaction 5-enolpyruvoyl-6-hydroxy-2-succinyl-cyclohex-3-ene-1-carboxylate = (1R,6R)-6-hydroxy-2-succinyl-cyclohexa-2,4-diene-1-carboxylate + pyruvate. It participates in quinol/quinone metabolism; 1,4-dihydroxy-2-naphthoate biosynthesis; 1,4-dihydroxy-2-naphthoate from chorismate: step 3/7. It functions in the pathway quinol/quinone metabolism; menaquinone biosynthesis. Its function is as follows. Catalyzes a proton abstraction reaction that results in 2,5-elimination of pyruvate from 2-succinyl-5-enolpyruvyl-6-hydroxy-3-cyclohexene-1-carboxylate (SEPHCHC) and the formation of 2-succinyl-6-hydroxy-2,4-cyclohexadiene-1-carboxylate (SHCHC). The protein is 2-succinyl-6-hydroxy-2,4-cyclohexadiene-1-carboxylate synthase of Salmonella heidelberg (strain SL476).